A 287-amino-acid chain; its full sequence is MAVGKEIKTQIASIKSTQKITSAMQLVAASKMRKAQQRMAAGRPYADRIRSVISHIATANPEYRHLYLQEREAKRVGYIVVSTDRGLCGGLNVNAFREMMRSMKEWRDKGAEVDLCAVGQKAISFFRNYGGNVVAALSHLGDDPSLTKIVGSVKVMLDAYAEGKIDRLYLVHNRFVNTMTQKPTVAQLLPLPPAEDDEMIRRHWDYIYEPDAKGLLDGLLTRFIESQVYQAVVENNACEQAARMIAMKSATDNAGGIINELELAYNKARQAAITQEISEIVSGAAAV.

This sequence belongs to the ATPase gamma chain family. As to quaternary structure, F-type ATPases have 2 components, CF(1) - the catalytic core - and CF(0) - the membrane proton channel. CF(1) has five subunits: alpha(3), beta(3), gamma(1), delta(1), epsilon(1). CF(0) has three main subunits: a, b and c.

It localises to the cell inner membrane. Functionally, produces ATP from ADP in the presence of a proton gradient across the membrane. The gamma chain is believed to be important in regulating ATPase activity and the flow of protons through the CF(0) complex. This is ATP synthase gamma chain from Hahella chejuensis (strain KCTC 2396).